Reading from the N-terminus, the 359-residue chain is Peptide chain release factor 1 (359 aa).

Q236 bears the N5-methylglutamine mark.

This sequence belongs to the prokaryotic/mitochondrial release factor family. Post-translationally, methylated by PrmC. Methylation increases the termination efficiency of RF1.

It is found in the cytoplasm. Peptide chain release factor 1 directs the termination of translation in response to the peptide chain termination codons UAG and UAA. The polypeptide is Peptide chain release factor 1 (Streptococcus pneumoniae (strain Taiwan19F-14)).